The sequence spans 312 residues: Glyoxylate/hydroxypyruvate reductase A (312 aa).

The active site involves arginine 227. Histidine 275 functions as the Proton donor in the catalytic mechanism.

It belongs to the D-isomer specific 2-hydroxyacid dehydrogenase family. GhrA subfamily.

It localises to the cytoplasm. It catalyses the reaction glycolate + NADP(+) = glyoxylate + NADPH + H(+). The catalysed reaction is (R)-glycerate + NAD(+) = 3-hydroxypyruvate + NADH + H(+). The enzyme catalyses (R)-glycerate + NADP(+) = 3-hydroxypyruvate + NADPH + H(+). Its function is as follows. Catalyzes the NADPH-dependent reduction of glyoxylate and hydroxypyruvate into glycolate and glycerate, respectively. The sequence is that of Glyoxylate/hydroxypyruvate reductase A from Salmonella dublin (strain CT_02021853).